A 382-amino-acid chain; its full sequence is Galactokinase (382 aa).

34–37 contributes to the substrate binding site; sequence EHTD. 124–130 contacts ATP; it reads GAGLSSS. Residues Ser130 and Glu162 each contribute to the Mg(2+) site. Asp174 acts as the Proton acceptor in catalysis. Tyr223 contributes to the substrate binding site.

Belongs to the GHMP kinase family. GalK subfamily.

The protein localises to the cytoplasm. The enzyme catalyses alpha-D-galactose + ATP = alpha-D-galactose 1-phosphate + ADP + H(+). Its pathway is carbohydrate metabolism; galactose metabolism. Catalyzes the transfer of the gamma-phosphate of ATP to D-galactose to form alpha-D-galactose-1-phosphate (Gal-1-P). The sequence is that of Galactokinase from Enterobacter sp. (strain 638).